A 427-amino-acid polypeptide reads, in one-letter code: Enolase (427 aa).

Residue Q164 coordinates (2R)-2-phosphoglycerate. Catalysis depends on E206, which acts as the Proton donor. 3 residues coordinate Mg(2+): D243, E284, and D311. Positions 336, 365, 366, and 387 each coordinate (2R)-2-phosphoglycerate. The active-site Proton acceptor is the K336.

The protein belongs to the enolase family. It depends on Mg(2+) as a cofactor.

Its subcellular location is the cytoplasm. It localises to the secreted. The protein resides in the cell surface. The enzyme catalyses (2R)-2-phosphoglycerate = phosphoenolpyruvate + H2O. It functions in the pathway carbohydrate degradation; glycolysis; pyruvate from D-glyceraldehyde 3-phosphate: step 4/5. Its function is as follows. Catalyzes the reversible conversion of 2-phosphoglycerate (2-PG) into phosphoenolpyruvate (PEP). It is essential for the degradation of carbohydrates via glycolysis. The chain is Enolase from Synechococcus sp. (strain JA-2-3B'a(2-13)) (Cyanobacteria bacterium Yellowstone B-Prime).